The chain runs to 76 residues: Small ribosomal subunit protein bS18 (76 aa).

It belongs to the bacterial ribosomal protein bS18 family. In terms of assembly, part of the 30S ribosomal subunit. Forms a tight heterodimer with protein bS6.

Binds as a heterodimer with protein bS6 to the central domain of the 16S rRNA, where it helps stabilize the platform of the 30S subunit. This is Small ribosomal subunit protein bS18 from Alkaliphilus metalliredigens (strain QYMF).